Here is a 235-residue protein sequence, read N- to C-terminus: 2,3-bisphosphoglycerate-dependent phosphoglycerate mutase (235 aa).

Substrate-binding positions include 8–15 (RHGESIWN), 21–22 (TG), R58, 110–113 (ERYY), K121, 137–138 (RR), and 181–182 (GN). The active-site Tele-phosphohistidine intermediate is H9. E110 (proton donor/acceptor) is an active-site residue.

This sequence belongs to the phosphoglycerate mutase family. BPG-dependent PGAM subfamily.

It catalyses the reaction (2R)-2-phosphoglycerate = (2R)-3-phosphoglycerate. It participates in carbohydrate degradation; glycolysis; pyruvate from D-glyceraldehyde 3-phosphate: step 3/5. Functionally, catalyzes the interconversion of 2-phosphoglycerate and 3-phosphoglycerate. The chain is 2,3-bisphosphoglycerate-dependent phosphoglycerate mutase from Methanococcus vannielii (strain ATCC 35089 / DSM 1224 / JCM 13029 / OCM 148 / SB).